The chain runs to 280 residues: Endochitinase A (280 aa).

Positions 1 to 25 are cleaved as a signal peptide; it reads MANAPRILALGLLALLCAAAGPAAA. Residues 26 to 60 enclose the Chitin-binding type-1 domain; it reads QNCGCQPNFCCSKFGYCGTTDAYCGDGCQSGPCRS. Cystine bridges form between Cys28/Cys36, Cys30/Cys42, Cys35/Cys49, and Cys53/Cys58. Residues 61–77 are hinge region (poly-Gly); sequence GGGGGGGGGGGGGGSGG. Residues 78–280 are catalytic; the sequence is ANVANVVTDA…RVDPGPNLTC (203 aa). Cys100 and Cys149 form a disulfide bridge. Glu144 acts as the Proton donor in catalysis. N-linked (GlcNAc...) asparagine glycosylation is present at Asn155. 2 disulfides stabilise this stretch: Cys161/Cys170 and Cys248/Cys280. N-linked (GlcNAc...) asparagine glycosylation occurs at Asn277.

The protein belongs to the glycosyl hydrolase 19 family. Chitinase class IV subfamily.

The protein resides in the secreted. The enzyme catalyses Random endo-hydrolysis of N-acetyl-beta-D-glucosaminide (1-&gt;4)-beta-linkages in chitin and chitodextrins.. With respect to regulation, inactivated by l-ethyl-3-(3-dimethylaminopropyl)carbodiimide (EDC) in the absence of exogenous nucleophiles (e.g. GlcNAc4, GlcNAc3 and GlcNAc2). Not inhibited by tetra-N-acetylchitopentaose or modified chitotetraose substrate TMG-chitotriomycin-pMP, containing a free, non-acetylated glucosaminyl residue or a N-trimethylamino glucosamine (TMG) residue at the non-reducing terminus, respectively. Defense against chitin-containing fungal pathogens. Hydrolyzes glycol chitin and tetra-N-acetylchitotetraose in vitro. Its action is countered by fungal polyglycine hydrolases and fungalysin, that cleave the chitin-binding domain from the protein. The sequence is that of Endochitinase A from Zea mays (Maize).